The primary structure comprises 335 residues: Methionine import ATP-binding protein MetN 1 (335 aa).

Residues 2 to 242 (IEFHNVHKTY…PQHATTRRFV (241 aa)) enclose the ABC transporter domain. 38–45 (GHSGAGKS) contacts ATP.

Belongs to the ABC transporter superfamily. Methionine importer (TC 3.A.1.24) family. As to quaternary structure, the complex is composed of two ATP-binding proteins (MetN), two transmembrane proteins (MetI) and a solute-binding protein (MetQ).

It is found in the cell inner membrane. The enzyme catalyses L-methionine(out) + ATP + H2O = L-methionine(in) + ADP + phosphate + H(+). It carries out the reaction D-methionine(out) + ATP + H2O = D-methionine(in) + ADP + phosphate + H(+). In terms of biological role, part of the ABC transporter complex MetNIQ involved in methionine import. Responsible for energy coupling to the transport system. The chain is Methionine import ATP-binding protein MetN 1 from Pseudomonas syringae pv. syringae (strain B728a).